The following is a 206-amino-acid chain: Ribosomal RNA large subunit methyltransferase E (206 aa).

G55, W57, D75, D91, and D116 together coordinate S-adenosyl-L-methionine. Catalysis depends on K156, which acts as the Proton acceptor.

The protein belongs to the class I-like SAM-binding methyltransferase superfamily. RNA methyltransferase RlmE family.

Its subcellular location is the cytoplasm. The enzyme catalyses uridine(2552) in 23S rRNA + S-adenosyl-L-methionine = 2'-O-methyluridine(2552) in 23S rRNA + S-adenosyl-L-homocysteine + H(+). In terms of biological role, specifically methylates the uridine in position 2552 of 23S rRNA at the 2'-O position of the ribose in the fully assembled 50S ribosomal subunit. The polypeptide is Ribosomal RNA large subunit methyltransferase E (Blochmanniella floridana).